We begin with the raw amino-acid sequence, 151 residues long: SsrA-binding protein (151 aa).

This sequence belongs to the SmpB family.

It is found in the cytoplasm. In terms of biological role, required for rescue of stalled ribosomes mediated by trans-translation. Binds to transfer-messenger RNA (tmRNA), required for stable association of tmRNA with ribosomes. tmRNA and SmpB together mimic tRNA shape, replacing the anticodon stem-loop with SmpB. tmRNA is encoded by the ssrA gene; the 2 termini fold to resemble tRNA(Ala) and it encodes a 'tag peptide', a short internal open reading frame. During trans-translation Ala-aminoacylated tmRNA acts like a tRNA, entering the A-site of stalled ribosomes, displacing the stalled mRNA. The ribosome then switches to translate the ORF on the tmRNA; the nascent peptide is terminated with the 'tag peptide' encoded by the tmRNA and targeted for degradation. The ribosome is freed to recommence translation, which seems to be the essential function of trans-translation. This Chlamydia pneumoniae (Chlamydophila pneumoniae) protein is SsrA-binding protein.